Here is a 174-residue protein sequence, read N- to C-terminus: Large ribosomal subunit protein uL10 (174 aa).

The protein belongs to the universal ribosomal protein uL10 family. As to quaternary structure, part of the ribosomal stalk of the 50S ribosomal subunit. The N-terminus interacts with L11 and the large rRNA to form the base of the stalk. The C-terminus forms an elongated spine to which L12 dimers bind in a sequential fashion forming a multimeric L10(L12)X complex.

Forms part of the ribosomal stalk, playing a central role in the interaction of the ribosome with GTP-bound translation factors. This Bordetella bronchiseptica (strain ATCC BAA-588 / NCTC 13252 / RB50) (Alcaligenes bronchisepticus) protein is Large ribosomal subunit protein uL10.